The primary structure comprises 729 residues: Denticleless protein homolog (729 aa).

Met-1 bears the N-acetylmethionine mark. WD repeat units lie at residues 47–89, 96–135, and 138–178; these read GVPV…SKKT, AHWNAVFDLAWVPGELKLVTAAGDQTAKFWDVRAGELMGT, and GHQC…KDGF. The DDB1-binding motif motif lies at 168-171; it reads WDTR. Over residues 189-198 the composition is skewed to polar residues; sequence HNTADKQTPS. The segment at 189 to 212 is disordered; sequence HNTADKQTPSKPKKKQNSKGLAPA. The residue at position 196 (Thr-196) is a Phosphothreonine. A Nuclear localization signal motif is present at residues 197-203; it reads PSKPKKK. WD repeat units lie at residues 214 to 253, 269 to 308, 313 to 354, and 358 to 398; these read DSQQSVTVVLFQDENTLVSAGAVDGIIKVWDLRKNYTAYR, TRKLGYSSLVLDSTGSTLFANCTDDNIYMFNMTGLKTSPV, GHQN…HPPT, and GHSQ…EEKP. The DDB1-binding motif motif lies at 243-246; the sequence is WDLR. 2 positions are modified to phosphoserine: Ser-409 and Ser-425. 2 disordered regions span residues 416 to 445 and 460 to 491; these read KACPVTVPSSQSTPAKAPRAKSSPSISSPS and PSSTPTFSVKTTPATTRSSVSRRGSISSVSPK. The segment covering 427–445 has biased composition (low complexity); sequence STPAKAPRAKSSPSISSPS. Residues 460 to 475 show a composition bias toward polar residues; sequence PSSTPTFSVKTTPATT. Thr-463 is subject to Phosphothreonine; by CDK1 and CDK2. A compositionally biased stretch (low complexity) spans 476–491; it reads RSSVSRRGSISSVSPK. Phosphoserine is present on residues Ser-484, Ser-489, Ser-494, and Ser-511. Residues 504–546 form a disordered region; sequence VTRTPSSSPPVTPPASETKISSPRKALIPVSQKSSQADACSES. Position 515 is a phosphothreonine (Thr-515). Residue Ser-556 is modified to Phosphoserine. The segment covering 596–607 has biased composition (polar residues); it reads VLSQDSEGPTKS. Residues 596–705 are disordered; the sequence is VLSQDSEGPT…GPVTITPSSM (110 aa). Low complexity-rich tracts occupy residues 630-645 and 674-688; these read EGCGPLPLPLRPCGEG and SSPRSPSSQTPSSRR. Residues Ser-675 and Ser-678 each carry the phosphoserine modification. Phosphothreonine occurs at positions 683 and 701.

This sequence belongs to the WD repeat cdt2 family. As to quaternary structure, component of the DCX(DTL) E3 ubiquitin ligase complex (also called CRL4(CDT2)), at least composed of CUL4 (CUL4A or CUL4B), DDB1, DTL/CDT2 and RBX1. Interacts with CDKN1A and DDB1. Interacts with FBXO11; SCF(FBXWO11) controls DTL stability but DCX(DTL) does not control FBXO11 stability. Interacts with CRY1. Post-translationally, ubiquitinated by the anaphase promoting complex/cyclosome (APC/C). Autoubiquitinated through 'Lys-48'-polyubiquitin chains in a PCNA-independent reaction, allowing proteasomal turnover. Polyubiquitinated by SCF(FBXO11) when not phosphorylated, leading to its degradation. A tight regulation of the polyubiquitination by SCF(FBXO11) is involved in the control of different processes such as TGF-beta signaling, cell cycle progression and exit. In terms of processing, phosphorylated at Thr-463 by CDK1/Cyclin B and CDK2/Cycnlin A but not by CDK2/Cyclin E, MAPK1 or PLK1. Phosphorylation at Thr-463 inhibits the interaction with FBXO11 and decreases upon cell cycle exit induced by TGF-beta or serum starvation.

The protein resides in the nucleus. It localises to the nucleus membrane. The protein localises to the cytoplasm. Its subcellular location is the cytoskeleton. It is found in the microtubule organizing center. The protein resides in the centrosome. It localises to the chromosome. The protein operates within protein modification; protein ubiquitination. Functionally, substrate-specific adapter of a DCX (DDB1-CUL4-X-box) E3 ubiquitin-protein ligase complex required for cell cycle control, DNA damage response and translesion DNA synthesis. The DCX(DTL) complex, also named CRL4(CDT2) complex, mediates the polyubiquitination and subsequent degradation of CDT1, CDKN1A/p21(CIP1), FBH1, KMT5A and SDE2. CDT1 degradation in response to DNA damage is necessary to ensure proper cell cycle regulation of DNA replication. CDKN1A/p21(CIP1) degradation during S phase or following UV irradiation is essential to control replication licensing. KMT5A degradation is also important for a proper regulation of mechanisms such as TGF-beta signaling, cell cycle progression, DNA repair and cell migration. Most substrates require their interaction with PCNA for their polyubiquitination: substrates interact with PCNA via their PIP-box, and those containing the 'K+4' motif in the PIP box, recruit the DCX(DTL) complex, leading to their degradation. In undamaged proliferating cells, the DCX(DTL) complex also promotes the 'Lys-164' monoubiquitination of PCNA, thereby being involved in PCNA-dependent translesion DNA synthesis. The DDB1-CUL4A-DTL E3 ligase complex regulates the circadian clock function by mediating the ubiquitination and degradation of CRY1. In Mus musculus (Mouse), this protein is Denticleless protein homolog (Dtl).